The following is a 201-amino-acid chain: 3-isopropylmalate dehydratase small subunit (201 aa).

The protein belongs to the LeuD family. LeuD type 1 subfamily. Heterodimer of LeuC and LeuD.

The enzyme catalyses (2R,3S)-3-isopropylmalate = (2S)-2-isopropylmalate. The protein operates within amino-acid biosynthesis; L-leucine biosynthesis; L-leucine from 3-methyl-2-oxobutanoate: step 2/4. Functionally, catalyzes the isomerization between 2-isopropylmalate and 3-isopropylmalate, via the formation of 2-isopropylmaleate. The sequence is that of 3-isopropylmalate dehydratase small subunit from Chloroflexus aurantiacus (strain ATCC 29366 / DSM 635 / J-10-fl).